We begin with the raw amino-acid sequence, 118 residues long: MRLLFLVLLVLLGLIQYPLWLGKGGWFKVWDLQRQVAEQRETNDGLRARNTALEAEVRDLATGVGAVEERARSELGMMREGEVFVHILPPGTPLPSDNSTPQASALSKPRPPATPPRR.

Residues 1–3 lie on the Cytoplasmic side of the membrane; it reads MRL. Residues 4–21 traverse the membrane as a helical segment; sequence LFLVLLVLLGLIQYPLWL. Over 22-118 the chain is Periplasmic; sequence GKGGWFKVWD…PRPPATPPRR (97 aa). A coiled-coil region spans residues 28–62; sequence KVWDLQRQVAEQRETNDGLRARNTALEAEVRDLAT. The tract at residues 88 to 118 is disordered; the sequence is LPPGTPLPSDNSTPQASALSKPRPPATPPRR. Residues 95 to 105 show a composition bias toward polar residues; the sequence is PSDNSTPQASA. Positions 109-118 are enriched in pro residues; sequence PRPPATPPRR.

It belongs to the FtsB family. In terms of assembly, part of a complex composed of FtsB, FtsL and FtsQ.

The protein localises to the cell inner membrane. Functionally, essential cell division protein. May link together the upstream cell division proteins, which are predominantly cytoplasmic, with the downstream cell division proteins, which are predominantly periplasmic. This chain is Cell division protein FtsB, found in Bordetella bronchiseptica (strain ATCC BAA-588 / NCTC 13252 / RB50) (Alcaligenes bronchisepticus).